A 319-amino-acid chain; its full sequence is Methionyl-tRNA formyltransferase (319 aa).

116–119 contacts (6S)-5,6,7,8-tetrahydrofolate; that stretch reads SLLP.

It belongs to the Fmt family.

It carries out the reaction L-methionyl-tRNA(fMet) + (6R)-10-formyltetrahydrofolate = N-formyl-L-methionyl-tRNA(fMet) + (6S)-5,6,7,8-tetrahydrofolate + H(+). Its function is as follows. Attaches a formyl group to the free amino group of methionyl-tRNA(fMet). The formyl group appears to play a dual role in the initiator identity of N-formylmethionyl-tRNA by promoting its recognition by IF2 and preventing the misappropriation of this tRNA by the elongation apparatus. The polypeptide is Methionyl-tRNA formyltransferase (Treponema pallidum (strain Nichols)).